A 247-amino-acid polypeptide reads, in one-letter code: GTP cyclohydrolase 1 type 2 homolog (247 aa).

Positions 63, 64, 101, 215, and 219 each coordinate a divalent metal cation.

Belongs to the GTP cyclohydrolase I type 2/NIF3 family. In terms of assembly, homohexamer.

This is GTP cyclohydrolase 1 type 2 homolog from Yersinia pestis.